The sequence spans 231 residues: Lipoprotein-releasing system ATP-binding protein LolD (231 aa).

The region spanning Leu-6–Gln-231 is the ABC transporter domain. Gly-42–Ser-49 is an ATP binding site.

This sequence belongs to the ABC transporter superfamily. Lipoprotein translocase (TC 3.A.1.125) family. In terms of assembly, the complex is composed of two ATP-binding proteins (LolD) and two transmembrane proteins (LolC and LolE).

Its subcellular location is the cell inner membrane. In terms of biological role, part of the ABC transporter complex LolCDE involved in the translocation of mature outer membrane-directed lipoproteins, from the inner membrane to the periplasmic chaperone, LolA. Responsible for the formation of the LolA-lipoprotein complex in an ATP-dependent manner. This chain is Lipoprotein-releasing system ATP-binding protein LolD, found in Shewanella sp. (strain MR-7).